Reading from the N-terminus, the 249-residue chain is Triosephosphate isomerase (249 aa).

Substrate is bound at residue 9 to 11; sequence NWK. Catalysis depends on His-94, which acts as the Electrophile. Glu-166 acts as the Proton acceptor in catalysis. Substrate contacts are provided by residues Gly-172 and 232–233; that span reads GG.

This sequence belongs to the triosephosphate isomerase family. As to quaternary structure, homodimer.

Its subcellular location is the cytoplasm. It carries out the reaction D-glyceraldehyde 3-phosphate = dihydroxyacetone phosphate. It participates in carbohydrate biosynthesis; gluconeogenesis. Its pathway is carbohydrate degradation; glycolysis; D-glyceraldehyde 3-phosphate from glycerone phosphate: step 1/1. Functionally, involved in the gluconeogenesis. Catalyzes stereospecifically the conversion of dihydroxyacetone phosphate (DHAP) to D-glyceraldehyde-3-phosphate (G3P). In Xylella fastidiosa (strain M12), this protein is Triosephosphate isomerase.